Consider the following 220-residue polypeptide: Large ribosomal subunit protein uL3 (220 aa).

The segment at 132–153 is disordered; that stretch reads SGRASHGNSRSHNVPGSIGMAQ. Residues 133-145 are compositionally biased toward polar residues; sequence GRASHGNSRSHNV. Position 153 is an N5-methylglutamine (Gln153).

This sequence belongs to the universal ribosomal protein uL3 family. Part of the 50S ribosomal subunit. Forms a cluster with proteins L14 and L19. Post-translationally, methylated by PrmB.

One of the primary rRNA binding proteins, it binds directly near the 3'-end of the 23S rRNA, where it nucleates assembly of the 50S subunit. This chain is Large ribosomal subunit protein uL3, found in Ralstonia nicotianae (strain ATCC BAA-1114 / GMI1000) (Ralstonia solanacearum).